The chain runs to 909 residues: UPF0182 protein Moth_1139 (909 aa).

The next 7 membrane-spanning stretches (helical) occupy residues 8–28, 51–71, 103–123, 165–185, 201–221, 245–265, and 277–297; these read FCLL…SHFL, VGIR…NLLF, LGIL…PLAA, LLIT…FIFN, LVHF…GFRL, LLPG…IIVL, and AGIL…PLAV. The segment at 843–862 is disordered; that stretch reads PAPAASPQPPSQAATGSPGN.

Belongs to the UPF0182 family.

It is found in the cell membrane. This chain is UPF0182 protein Moth_1139, found in Moorella thermoacetica (strain ATCC 39073 / JCM 9320).